The following is a 368-amino-acid chain: Quinolinate synthase (368 aa).

His-46 and Ser-63 together coordinate iminosuccinate. Cys-110 contacts [4Fe-4S] cluster. Residues 141–143 and Ser-162 contribute to the iminosuccinate site; that span reads YVN. Cys-230 is a binding site for [4Fe-4S] cluster. Residues 256–258 and Thr-273 each bind iminosuccinate; that span reads HPE. [4Fe-4S] cluster is bound at residue Cys-320.

This sequence belongs to the quinolinate synthase family. Type 3 subfamily. [4Fe-4S] cluster is required as a cofactor.

The protein localises to the cytoplasm. The enzyme catalyses iminosuccinate + dihydroxyacetone phosphate = quinolinate + phosphate + 2 H2O + H(+). Its pathway is cofactor biosynthesis; NAD(+) biosynthesis; quinolinate from iminoaspartate: step 1/1. Catalyzes the condensation of iminoaspartate with dihydroxyacetone phosphate to form quinolinate. The sequence is that of Quinolinate synthase from Bacillus cytotoxicus (strain DSM 22905 / CIP 110041 / 391-98 / NVH 391-98).